Reading from the N-terminus, the 230-residue chain is Ribosome biogenesis protein SLX9 homolog (230 aa).

Residues 1–11 are compositionally biased toward basic residues; sequence MGKVRGLRARV. 2 disordered regions span residues 1-42 and 155-187; these read MGKV…SAAG and LGLEAGSRRQARSRESNKPRPSELSRMSAAQRQ. Residues 25–38 are compositionally biased toward pro residues; that stretch reads GPAPPAPEATPPPA. Thr-34 bears the Phosphothreonine mark. The segment covering 166–177 has biased composition (basic and acidic residues); that stretch reads RSRESNKPRPSE. Ser-203 is subject to Phosphoserine.

This sequence belongs to the SLX9 family. In terms of tissue distribution, not detected in any tested tissue.

It is found in the nucleus. It localises to the nucleolus. In terms of biological role, may be involved in ribosome biogenesis. The sequence is that of Ribosome biogenesis protein SLX9 homolog from Homo sapiens (Human).